The sequence spans 51 residues: Sperm protamine P1 (51 aa).

Cystine bridges form between C7/C15 and C40/C48.

The protein belongs to the protamine P1 family. As to quaternary structure, cross-linked by interchain disulfide bonds around the DNA-helix. Phosphorylated by SRPK1. As to expression, testis.

It localises to the nucleus. It is found in the chromosome. Its function is as follows. Protamines substitute for histones in the chromatin of sperm during the haploid phase of spermatogenesis. They compact sperm DNA into a highly condensed, stable and inactive complex. The protein is Sperm protamine P1 (PRM1) of Bos taurus (Bovine).